The sequence spans 186 residues: Inner membrane-spanning protein YciB (186 aa).

5 helical membrane-spanning segments follow: residues Ile10 to Ile30, Val47 to Leu67, Trp76 to Phe96, Trp121 to Phe141, and Phe149 to Leu169.

The protein belongs to the YciB family.

It is found in the cell inner membrane. In terms of biological role, plays a role in cell envelope biogenesis, maintenance of cell envelope integrity and membrane homeostasis. The sequence is that of Inner membrane-spanning protein YciB from Acidovorax ebreus (strain TPSY) (Diaphorobacter sp. (strain TPSY)).